Reading from the N-terminus, the 292-residue chain is Lipoyl synthase (292 aa).

[4Fe-4S] cluster-binding residues include Cys-38, Cys-43, Cys-49, Cys-64, Cys-68, Cys-71, and Ser-277. A Radical SAM core domain is found at 50–266 (WSKGTATFLL…REIALDAGFR (217 aa)).

Belongs to the radical SAM superfamily. Lipoyl synthase family. It depends on [4Fe-4S] cluster as a cofactor.

The protein localises to the cytoplasm. It catalyses the reaction [[Fe-S] cluster scaffold protein carrying a second [4Fe-4S](2+) cluster] + N(6)-octanoyl-L-lysyl-[protein] + 2 oxidized [2Fe-2S]-[ferredoxin] + 2 S-adenosyl-L-methionine + 4 H(+) = [[Fe-S] cluster scaffold protein] + N(6)-[(R)-dihydrolipoyl]-L-lysyl-[protein] + 4 Fe(3+) + 2 hydrogen sulfide + 2 5'-deoxyadenosine + 2 L-methionine + 2 reduced [2Fe-2S]-[ferredoxin]. The protein operates within protein modification; protein lipoylation via endogenous pathway; protein N(6)-(lipoyl)lysine from octanoyl-[acyl-carrier-protein]: step 2/2. Its function is as follows. Catalyzes the radical-mediated insertion of two sulfur atoms into the C-6 and C-8 positions of the octanoyl moiety bound to the lipoyl domains of lipoate-dependent enzymes, thereby converting the octanoylated domains into lipoylated derivatives. The polypeptide is Lipoyl synthase (Chlorobaculum parvum (strain DSM 263 / NCIMB 8327) (Chlorobium vibrioforme subsp. thiosulfatophilum)).